Reading from the N-terminus, the 324-residue chain is MATH domain and coiled-coil domain-containing protein At3g44790 (324 aa).

The 123-residue stretch at 3 to 125 (YEKFTWVIKN…NNEVKIVVEV (123 aa)) folds into the MATH domain. The stretch at 241–309 (FKVDWLERKL…ALLEKEKAKS (69 aa)) forms a coiled coil.

The sequence is that of MATH domain and coiled-coil domain-containing protein At3g44790 from Arabidopsis thaliana (Mouse-ear cress).